A 346-amino-acid polypeptide reads, in one-letter code: Elongation factor 1-alpha (346 aa).

The tr-type G domain maps to 1–127; the sequence is GTSQADVALL…DNVEPPKRPS (127 aa). Position 49–52 (49–52) interacts with GTP; the sequence is NKMD.

This sequence belongs to the TRAFAC class translation factor GTPase superfamily. Classic translation factor GTPase family. EF-Tu/EF-1A subfamily.

It is found in the cytoplasm. This protein promotes the GTP-dependent binding of aminoacyl-tRNA to the A-site of ribosomes during protein biosynthesis. In Eimeria bovis, this protein is Elongation factor 1-alpha.